Consider the following 239-residue polypeptide: Ribosomal RNA large subunit methyltransferase E (239 aa).

Positions 81, 83, 104, 120, and 144 each coordinate S-adenosyl-L-methionine. Residue Lys184 is the Proton acceptor of the active site.

This sequence belongs to the class I-like SAM-binding methyltransferase superfamily. RNA methyltransferase RlmE family.

The protein localises to the cytoplasm. The catalysed reaction is uridine(2552) in 23S rRNA + S-adenosyl-L-methionine = 2'-O-methyluridine(2552) in 23S rRNA + S-adenosyl-L-homocysteine + H(+). In terms of biological role, specifically methylates the uridine in position 2552 of 23S rRNA at the 2'-O position of the ribose in the fully assembled 50S ribosomal subunit. This is Ribosomal RNA large subunit methyltransferase E from Rhizobium rhizogenes (strain K84 / ATCC BAA-868) (Agrobacterium radiobacter).